Here is a 124-residue protein sequence, read N- to C-terminus: Putative iron-sulfur cluster insertion protein ErpA (124 aa).

Iron-sulfur cluster contacts are provided by Cys-52, Cys-116, and Cys-118.

The protein belongs to the HesB/IscA family. As to quaternary structure, homodimer. It depends on iron-sulfur cluster as a cofactor.

Its function is as follows. Required for insertion of 4Fe-4S clusters. The chain is Putative iron-sulfur cluster insertion protein ErpA from Ralstonia nicotianae (strain ATCC BAA-1114 / GMI1000) (Ralstonia solanacearum).